The sequence spans 557 residues: Dihydroxy-acid dehydratase (557 aa).

Residue Asp-78 coordinates Mg(2+). Cys-119 is a [2Fe-2S] cluster binding site. Residues Asp-120 and Lys-121 each coordinate Mg(2+). Lys-121 is subject to N6-carboxylysine. Residue Cys-192 coordinates [2Fe-2S] cluster. Position 442 (Glu-442) interacts with Mg(2+). Ser-468 (proton acceptor) is an active-site residue.

The protein belongs to the IlvD/Edd family. Homodimer. [2Fe-2S] cluster serves as cofactor. Mg(2+) is required as a cofactor.

It carries out the reaction (2R)-2,3-dihydroxy-3-methylbutanoate = 3-methyl-2-oxobutanoate + H2O. The enzyme catalyses (2R,3R)-2,3-dihydroxy-3-methylpentanoate = (S)-3-methyl-2-oxopentanoate + H2O. Its pathway is amino-acid biosynthesis; L-isoleucine biosynthesis; L-isoleucine from 2-oxobutanoate: step 3/4. The protein operates within amino-acid biosynthesis; L-valine biosynthesis; L-valine from pyruvate: step 3/4. Its function is as follows. Functions in the biosynthesis of branched-chain amino acids. Catalyzes the dehydration of (2R,3R)-2,3-dihydroxy-3-methylpentanoate (2,3-dihydroxy-3-methylvalerate) into 2-oxo-3-methylpentanoate (2-oxo-3-methylvalerate) and of (2R)-2,3-dihydroxy-3-methylbutanoate (2,3-dihydroxyisovalerate) into 2-oxo-3-methylbutanoate (2-oxoisovalerate), the penultimate precursor to L-isoleucine and L-valine, respectively. The sequence is that of Dihydroxy-acid dehydratase from Bacillus cytotoxicus (strain DSM 22905 / CIP 110041 / 391-98 / NVH 391-98).